Reading from the N-terminus, the 258-residue chain is MADTNPIKQFEVHEVFPFEAFGLNLAFTNSSYFMVLTTVLTIVLFMVAMSSRALVPNRAQSVAEIIYGFVADMVRSTAGQEGLRFFPFVFTLFIFILVANMLGMFPYFPAPGAHSFTITSHLIVTVALAMLVWLTVIIYGVFKNGFGFLKLFVPSGVPIFVLPLVVVIEIISFVSRPLSHSVRLFANMLAGHILLKVFAGFVVTLAAAWGGFGYLAGIAPLAMAVSLTALEFLVAFLQAYVFAMLTCIYLNDALHPGH.

Helical transmembrane passes span 30–50 (SSYF…VAMS), 85–105 (FFPF…LGMF), 122–142 (LIVT…YGVF), 151–171 (LFVP…IEII), 198–218 (FAGF…LAGI), and 230–250 (LEFL…CIYL).

This sequence belongs to the ATPase A chain family. As to quaternary structure, F-type ATPases have 2 components, CF(1) - the catalytic core - and CF(0) - the membrane proton channel. CF(1) has five subunits: alpha(3), beta(3), gamma(1), delta(1), epsilon(1). CF(0) has three main subunits: a(1), b(2) and c(9-12). The alpha and beta chains form an alternating ring which encloses part of the gamma chain. CF(1) is attached to CF(0) by a central stalk formed by the gamma and epsilon chains, while a peripheral stalk is formed by the delta and b chains.

It is found in the cell inner membrane. In terms of biological role, key component of the proton channel; it plays a direct role in the translocation of protons across the membrane. In Maricaulis maris (strain MCS10) (Caulobacter maris), this protein is ATP synthase subunit a.